The sequence spans 180 residues: MKPDKTENTEHGIEPVSKTKRKAEADALQAIGVTLTELPRDKLNKLDLPEALLDAVNEAKRITSNGALRRQMQYIGRLMRDIDTDPIVEQLQRWEGSHTEENARFHRLEQWRNRLIEDESALSEFISEFPNTEAQQVRNLIRNARREHAAGKPPKSSRELFKLLRSITEAPPPGTELSAD.

The segment covering 1–13 (MKPDKTENTEHGI) has biased composition (basic and acidic residues). Residues 1 to 21 (MKPDKTENTEHGIEPVSKTKR) are disordered.

It belongs to the DarP family.

It localises to the cytoplasm. In terms of biological role, member of a network of 50S ribosomal subunit biogenesis factors which assembles along the 30S-50S interface, preventing incorrect 23S rRNA structures from forming. Promotes peptidyl transferase center (PTC) maturation. The protein is Dual-action ribosomal maturation protein DarP of Methylobacillus flagellatus (strain ATCC 51484 / DSM 6875 / VKM B-1610 / KT).